The sequence spans 474 residues: tRNA-2-methylthio-N(6)-dimethylallyladenosine synthase (474 aa).

The MTTase N-terminal domain occupies 3–120 (KKLHIKTWGC…LPDMIEQVRR (118 aa)). [4Fe-4S] cluster is bound by residues C12, C49, C83, C157, C161, and C164. The Radical SAM core domain maps to 143-375 (RAEGPTAFVS…QDRITQQAMR (233 aa)). The TRAM domain occupies 378-441 (RHMMGTVQRI…TNSLRGKFIR (64 aa)).

The protein belongs to the methylthiotransferase family. MiaB subfamily. In terms of assembly, monomer. It depends on [4Fe-4S] cluster as a cofactor.

The protein resides in the cytoplasm. The catalysed reaction is N(6)-dimethylallyladenosine(37) in tRNA + (sulfur carrier)-SH + AH2 + 2 S-adenosyl-L-methionine = 2-methylsulfanyl-N(6)-dimethylallyladenosine(37) in tRNA + (sulfur carrier)-H + 5'-deoxyadenosine + L-methionine + A + S-adenosyl-L-homocysteine + 2 H(+). Functionally, catalyzes the methylthiolation of N6-(dimethylallyl)adenosine (i(6)A), leading to the formation of 2-methylthio-N6-(dimethylallyl)adenosine (ms(2)i(6)A) at position 37 in tRNAs that read codons beginning with uridine. The chain is tRNA-2-methylthio-N(6)-dimethylallyladenosine synthase from Shewanella sp. (strain MR-4).